A 279-amino-acid polypeptide reads, in one-letter code: 3-methyl-2-oxobutanoate hydroxymethyltransferase (279 aa).

Residues aspartate 43 and aspartate 82 each contribute to the Mg(2+) site. 3-methyl-2-oxobutanoate-binding positions include 43 to 44, aspartate 82, and lysine 112; that span reads DS. Glutamate 114 lines the Mg(2+) pocket. The active-site Proton acceptor is the glutamate 181.

Belongs to the PanB family. As to quaternary structure, homodecamer; pentamer of dimers. Requires Mg(2+) as cofactor.

Its subcellular location is the cytoplasm. The enzyme catalyses 3-methyl-2-oxobutanoate + (6R)-5,10-methylene-5,6,7,8-tetrahydrofolate + H2O = 2-dehydropantoate + (6S)-5,6,7,8-tetrahydrofolate. It functions in the pathway cofactor biosynthesis; (R)-pantothenate biosynthesis; (R)-pantoate from 3-methyl-2-oxobutanoate: step 1/2. Catalyzes the reversible reaction in which hydroxymethyl group from 5,10-methylenetetrahydrofolate is transferred onto alpha-ketoisovalerate to form ketopantoate. This chain is 3-methyl-2-oxobutanoate hydroxymethyltransferase, found in Geobacillus kaustophilus (strain HTA426).